The following is a 357-amino-acid chain: Alkanal monooxygenase alpha chain (357 aa).

Belongs to the bacterial luciferase oxidoreductase family. Heterodimer of an alpha and a beta chain.

The catalysed reaction is a long-chain fatty aldehyde + FMNH2 + O2 = a long-chain fatty acid + hnu + FMN + H2O + 2 H(+). Light-emitting reaction in luminous bacteria. The chain is Alkanal monooxygenase alpha chain (luxA) from Kryptophanaron alfredi symbiont.